The primary structure comprises 1202 residues: Caffeine-induced protein 16 (1202 aa).

One can recognise a PAP-associated domain in the interval 1105-1159 (NIALLLRGFFCYYGLTTQYSFDWEAYMIDISSSQLKRKSTEFKDCPFVVLDPFLK).

The protein is Caffeine-induced protein 16 (cid16) of Schizosaccharomyces pombe (strain 972 / ATCC 24843) (Fission yeast).